The following is a 298-amino-acid chain: Mitochondrial glycine transporter (298 aa).

Solcar repeat units follow at residues 5 to 84, 105 to 189, and 211 to 295; these read TKTR…MRTA, LTTY…AKEV, and TSTL…LIKL. Transmembrane regions (helical) follow at residues 11–36, 59–85, 111–136, 164–187, 215–241, and 270–288; these read LIGG…TRIQ, GTLP…RTAI, LISG…VRYE, GFGP…EKAK, VNST…KTRM, and GLSM…AWGI.

The protein belongs to the mitochondrial carrier (TC 2.A.29) family. SLC25A38 subfamily.

The protein localises to the mitochondrion inner membrane. The enzyme catalyses glycine(in) = glycine(out). Functionally, mitochondrial glycine transporter that imports glycine into the mitochondrial matrix. Plays an important role in providing glycine for the first enzymatic step in heme biosynthesis, the condensation of glycine with succinyl-CoA to produce 5-aminolevulinate (ALA) in the mitochondrial matrix. This chain is Mitochondrial glycine transporter, found in Vanderwaltozyma polyspora (strain ATCC 22028 / DSM 70294 / BCRC 21397 / CBS 2163 / NBRC 10782 / NRRL Y-8283 / UCD 57-17) (Kluyveromyces polysporus).